The following is a 1061-amino-acid chain: Atrial natriuretic peptide receptor 1 (1061 aa).

An N-terminal signal peptide occupies residues 1 to 32 (MPGPRRPAGSRLRLLLLLLLPPLLLLLRGSHA). At 33-473 (GNLTVAVVLP…CNQDHLSTLE (441 aa)) the chain is on the extracellular side. Residues N34 and N45 are each glycosylated (N-linked (GlcNAc...) asparagine). Positions 85, 117, and 118 each coordinate chloride. Cystine bridges form between C92/C118 and C196/C245. Residues N212, N338, N379, N386, and N427 are each glycosylated (N-linked (GlcNAc...) asparagine). A disulfide bond links C455 and C464. The chain crosses the membrane as a helical span at residues 474 to 494 (VLALVGSLSLLGILIVSFFIY). Over 495–1061 (RKMQLEKELA…LGERGSSTRG (567 aa)) the chain is Cytoplasmic. 2 positions are modified to phosphoserine: S519 and S529. The Protein kinase domain maps to 528–805 (GSRLTLSGRG…QIRLTLRKFN (278 aa)). T532 is modified (phosphothreonine). Phosphoserine is present on residues S534, S538, and S542. T545 is subject to Phosphothreonine. The Guanylate cyclase domain maps to 876–1006 (TIYFSDIVGF…DTVNTASRME (131 aa)).

Belongs to the adenylyl cyclase class-4/guanylyl cyclase family. As to quaternary structure, homodimer. In terms of processing, phosphorylation of the protein kinase-like domain is required for full activation by ANP.

Its subcellular location is the membrane. The catalysed reaction is GTP = 3',5'-cyclic GMP + diphosphate. In terms of biological role, receptor for the atrial natriuretic peptide NPPA/ANP and the brain natriuretic peptide NPPB/BNP which are potent vasoactive hormones playing a key role in cardiovascular homeostasis. Plays an essential role in the regulation of endothelial cell senescence and vascular aging. Upon activation by ANP or BNP, stimulates the production of cyclic guanosine monophosphate (cGMP) that promotes vascular tone and volume homeostasis by activation of protein kinase cGMP-dependent 1/PRKG1 and subsequently PRKAA1, thereby controlling blood pressure and maintaining cardiovascular homeostasis. The sequence is that of Atrial natriuretic peptide receptor 1 from Homo sapiens (Human).